Reading from the N-terminus, the 390-residue chain is GLH-binding kinase 1 (390 aa).

The region spanning 38–338 (YVNLSFLNAG…VEDALNHPYV (301 aa)) is the Protein kinase domain. Residues 44–52 (LNAGAQGTV) and Lys-67 contribute to the ATP site. Asp-164 serves as the catalytic Proton acceptor. Ser-198 carries the post-translational modification Phosphoserine. A Phosphotyrosine modification is found at Tyr-200.

It belongs to the protein kinase superfamily. CMGC Ser/Thr protein kinase family. MAP kinase subfamily. Interacts with glh-1, glh-2 (via C-terminus), glh-3 (via C-terminus) and glh-4 (via C-terminus). Interacts with csn-5; the interaction may prevent glh-1 degradation induced by kgb-1. Interacts with fos-1. It depends on Mg(2+) as a cofactor. In terms of processing, may be phosphorylated by mek-1 on Ser-198 and/or Tyr-200. Phosphorylation is induced upon Cu(2+) and arsenite-mediated cell stimulation and by fasting. In terms of tissue distribution, expressed in somatic and germline tissues.

The protein resides in the cytoplasm. It carries out the reaction L-seryl-[protein] + ATP = O-phospho-L-seryl-[protein] + ADP + H(+). The catalysed reaction is L-threonyl-[protein] + ATP = O-phospho-L-threonyl-[protein] + ADP + H(+). Its activity is regulated as follows. Activated by mek-1 mediated phosphorylation. No differences in basal activation between larvae and adults. Inhibited by phosphatase vhp-1. Mitogen-activated protein kinase which is an essential component of the JNK pathway composed of mlk-1, mek-1 and kgb-1. Phosphorylates the transcription factor fos-1 which prevents fos-1 dimerization and promoter binding and results in activation of target genes including F53A9.2/kreg-1 and lys-3/kreg-2. Phosphorylates jun-1 and activates the AP-1 transcription factor which is a heterodimer of jun-1 and fos-1. Phosphorylates glh-1 in vitro which may play a role in controlling glh-1 protein levels in the germline by targeting it for degradation by the proteasome. Required for oogenesis and probably also for spermatogenesis. Involved in the response to environmental stress such as heavy metals, infection and protein folding stress in an age-dependent manner. In larvae, has a protective role which becomes detrimental in adults. May control susceptibility to infection, heavy metal stress and premature lethality by regulating daf-16 cellular localization. Involved in the transcriptional response to bacterial pore-forming toxins and to fasting. Required for fasting-induced longevity. Involved in axon regeneration after injury downstream of tyrosine receptor svh-2. The sequence is that of GLH-binding kinase 1 from Caenorhabditis elegans.